The chain runs to 274 residues: Probable ribosomal RNA small subunit methyltransferase A (274 aa).

S-adenosyl-L-methionine-binding residues include H22, L24, G50, E71, D99, and N114.

This sequence belongs to the class I-like SAM-binding methyltransferase superfamily. rRNA adenine N(6)-methyltransferase family. RsmA subfamily.

The protein localises to the cytoplasm. Functionally, specifically dimethylates two adjacent adenosines in the loop of a conserved hairpin near the 3'-end of 16S rRNA in the 30S particle. May play a critical role in biogenesis of 30S subunits. The polypeptide is Probable ribosomal RNA small subunit methyltransferase A (Natronomonas pharaonis (strain ATCC 35678 / DSM 2160 / CIP 103997 / JCM 8858 / NBRC 14720 / NCIMB 2260 / Gabara) (Halobacterium pharaonis)).